A 427-amino-acid polypeptide reads, in one-letter code: Histidinol dehydrogenase (427 aa).

Tyrosine 125, glutamine 186, and asparagine 209 together coordinate NAD(+). Substrate-binding residues include serine 234, glutamine 256, and histidine 259. 2 residues coordinate Zn(2+): glutamine 256 and histidine 259. Catalysis depends on proton acceptor residues glutamate 325 and histidine 326. Substrate is bound by residues histidine 326, aspartate 359, glutamate 413, and histidine 419. Aspartate 359 contributes to the Zn(2+) binding site. Histidine 419 lines the Zn(2+) pocket.

Belongs to the histidinol dehydrogenase family. It depends on Zn(2+) as a cofactor.

It carries out the reaction L-histidinol + 2 NAD(+) + H2O = L-histidine + 2 NADH + 3 H(+). It functions in the pathway amino-acid biosynthesis; L-histidine biosynthesis; L-histidine from 5-phospho-alpha-D-ribose 1-diphosphate: step 9/9. Functionally, catalyzes the sequential NAD-dependent oxidations of L-histidinol to L-histidinaldehyde and then to L-histidine. The protein is Histidinol dehydrogenase of Leptospira interrogans serogroup Icterohaemorrhagiae serovar Lai (strain 56601).